The sequence spans 200 residues: MAKKTYDLLFKLLLIGDSGVGKTCVLFRFSDDAFNTTFISTIEIDFKIKTVELQGKKIKLQIWDTAGQERFHTITTSYYRGAMGIMLVYDITNGKSFENISKWLRNIDQHANEDVERMLLRNKCDMDHKRVVPKGKGEQIAREHRIRFFETSAKANINIEKAFLTLPEDILRKTPVKEPNSENVDISSGGGVTGWKSKCC.

11 residues coordinate GTP: serine 18, glycine 19, valine 20, glycine 21, lysine 22, threonine 23, cysteine 24, asparagine 35, threonine 36, serine 40, and threonine 41. Threonine 23 lines the Mg(2+) pocket. 2 consecutive short sequence motifs (switch) follow at residues aspartate 32–phenylalanine 46 and aspartate 64–glycine 81. Mg(2+) contacts are provided by threonine 41 and aspartate 64. Residue glycine 67 participates in GTP binding. Threonine 73 is modified (phosphothreonine). N6-acetyllysine is present on lysine 102. Lysine 102 participates in a covalent cross-link: Glycyl lysine isopeptide (Lys-Gly) (interchain with G-Cter in ubiquitin). The GTP site is built by asparagine 122, lysine 123, aspartate 125, and methionine 126. Lysine 136 is covalently cross-linked (Glycyl lysine isopeptide (Lys-Gly) (interchain with G-Cter in ubiquitin)). 3 residues coordinate GTP: serine 152, alanine 153, and lysine 154. A Glycyl lysine isopeptide (Lys-Gly) (interchain with G-Cter in ubiquitin) cross-link involves residue lysine 154. 2 S-geranylgeranyl cysteine lipidation sites follow: cysteine 199 and cysteine 200.

The protein belongs to the small GTPase superfamily. Rab family. As to quaternary structure, interacts with MYO5A; mediates the transport to the plasma membrane of SLC2A4/GLUT4 storage vesicles. Interacts with GDI1 and with GDI2; negatively regulates RAB10 association with membranes and activation. Interacts (GDP-bound form) with LLGL1; the interaction is direct and promotes RAB10 association with membranes and activation through competition with the Rab inhibitor GDI1. Interacts with EXOC4; probably associates with the exocyst. Interacts (GTP-bound form) with MICALCL, MICAL1, MICAL3, EHBP1 and EHBP1L1; at least in case of MICAL1 two molecules of RAB10 can bind to one molecule of MICAL1. Interacts with TBC1D13. Interacts with SEC16A. Interacts with CHM. Interacts with LRRK2; interaction facilitates phosphorylation of Thr-73. Interacts with RILPL1 and RILPL2 when phosphorylated on Thr-73. Interacts with TBC1D21. Interacts with MARCKS. The cofactor is Mg(2+). In terms of processing, phosphorylation of Thr-73 in the switch II region by LRRK2 prevents the association of RAB regulatory proteins, including CHM and RAB GDP dissociation inhibitors GDI1 and GDI2. Phosphorylation of Thr-73 by LRRK2 is stimulated by RAB29 and RAB32. Phosphorylation by LRRK2 is required for localization to stressed lysosomes. Highest levels in neural and muscle tissues.

Its subcellular location is the cytoplasmic vesicle membrane. It localises to the golgi apparatus. The protein localises to the trans-Golgi network membrane. The protein resides in the endosome membrane. It is found in the recycling endosome membrane. Its subcellular location is the cytoplasmic vesicle. It localises to the phagosome membrane. The protein localises to the cell projection. The protein resides in the cilium. It is found in the endoplasmic reticulum membrane. Its subcellular location is the cytoplasm. It localises to the perinuclear region. The protein localises to the lysosome. It catalyses the reaction GTP + H2O = GDP + phosphate + H(+). Regulated by guanine nucleotide exchange factors (GEFs) DENND4C and RABIF which promote the exchange of bound GDP for free GTP. Regulated by GTPase activating proteins (GAPs) including TBC1D21 which increase the GTP hydrolysis activity. Inhibited by GDP dissociation inhibitors GDI1 and GDI2 which prevent Rab-GDP dissociation. In terms of biological role, the small GTPases Rab are key regulators of intracellular membrane trafficking, from the formation of transport vesicles to their fusion with membranes. Rabs cycle between an inactive GDP-bound form and an active GTP-bound form that is able to recruit to membranes different set of downstream effectors directly responsible for vesicle formation, movement, tethering and fusion. That Rab is mainly involved in the biosynthetic transport of proteins from the Golgi to the plasma membrane. Regulates, for instance, SLC2A4/GLUT4 glucose transporter-enriched vesicles delivery to the plasma membrane. In parallel, it regulates the transport of TLR4, a toll-like receptor to the plasma membrane and therefore may be important for innate immune response. Also plays a specific role in asymmetric protein transport to the plasma membrane. In neurons, it is involved in axonogenesis through regulation of vesicular membrane trafficking toward the axonal plasma membrane. In epithelial cells, it regulates transport from the Golgi to the basolateral membrane. May play a role in the basolateral recycling pathway and in phagosome maturation. May play a role in endoplasmic reticulum dynamics and morphology controlling tubulation along microtubules and tubules fusion. Together with LRRK2, RAB8A, and RILPL1, it regulates ciliogenesis. When phosphorylated by LRRK2 on Thr-73, it binds RILPL1 and inhibits ciliogenesis. Participates in the export of a subset of neosynthesized proteins through a Rab8-Rab10-Rab11-dependent endososomal export route. Targeted to and stabilized on stressed lysosomes through LRRK2 phosphorylation where it promotes the extracellular release of lysosomal content through EHBP1 and EHNP1L1 effector proteins. The chain is Ras-related protein Rab-10 from Rattus norvegicus (Rat).